We begin with the raw amino-acid sequence, 459 residues long: Argininosuccinate lyase (459 aa).

This sequence belongs to the lyase 1 family. Argininosuccinate lyase subfamily.

The protein resides in the cytoplasm. The enzyme catalyses 2-(N(omega)-L-arginino)succinate = fumarate + L-arginine. Its pathway is amino-acid biosynthesis; L-arginine biosynthesis; L-arginine from L-ornithine and carbamoyl phosphate: step 3/3. The protein is Argininosuccinate lyase of Lactococcus lactis subsp. cremoris (strain MG1363).